The sequence spans 56 residues: UPF0391 membrane protein HCH_04387 (56 aa).

2 helical membrane-spanning segments follow: residues 6–26 (IVFF…IAAA) and 30–50 (IAQI…IAGG).

The protein belongs to the UPF0391 family.

It localises to the cell membrane. In Hahella chejuensis (strain KCTC 2396), this protein is UPF0391 membrane protein HCH_04387.